The chain runs to 534 residues: Prolyl 4-hydroxylase subunit alpha-1 (534 aa).

An N-terminal signal peptide occupies residues 1–17 (MIWGVLMMGILLPQCSA). A glycan (N-linked (GlcNAc...) asparagine) is linked at Asn113. A TPR repeat occupies 205 to 238 (VSVLDYLSYAVYQQGDLDKALLLTKKLLELDPEH). N-linked (GlcNAc...) asparagine glycosylation occurs at Asn259. One can recognise a Fe2OG dioxygenase domain in the interval 411–519 (TAEELQVANY…KWVSNKWLHE (109 aa)). Residues His429, Asp431, and His500 each coordinate Fe cation. 2-oxoglutarate is bound at residue Lys510.

It belongs to the P4HA family. Heterotetramer of two alpha-1 chains and two beta chains (P4HB)(the beta chain is the multi-functional PDI), where P4HB plays the role of a structural subunit; this tetramer catalyzes the formation of 4-hydroxyproline in collagen. It depends on Fe(2+) as a cofactor. L-ascorbate is required as a cofactor.

The protein localises to the endoplasmic reticulum lumen. It catalyses the reaction L-prolyl-[collagen] + 2-oxoglutarate + O2 = trans-4-hydroxy-L-prolyl-[collagen] + succinate + CO2. Catalyzes the post-translational formation of 4-hydroxyproline in -Xaa-Pro-Gly- sequences in collagens and other proteins. The polypeptide is Prolyl 4-hydroxylase subunit alpha-1 (P4ha1) (Rattus norvegicus (Rat)).